A 469-amino-acid polypeptide reads, in one-letter code: ATP-dependent protease ATPase subunit HslU (469 aa).

Residues Ile-24, Gly-66–Glu-71, Asp-282, Glu-347, and Arg-419 each bind ATP.

Belongs to the ClpX chaperone family. HslU subfamily. A double ring-shaped homohexamer of HslV is capped on each side by a ring-shaped HslU homohexamer. The assembly of the HslU/HslV complex is dependent on binding of ATP.

Its subcellular location is the cytoplasm. Functionally, ATPase subunit of a proteasome-like degradation complex; this subunit has chaperone activity. The binding of ATP and its subsequent hydrolysis by HslU are essential for unfolding of protein substrates subsequently hydrolyzed by HslV. HslU recognizes the N-terminal part of its protein substrates and unfolds these before they are guided to HslV for hydrolysis. This Listeria monocytogenes serotype 4b (strain CLIP80459) protein is ATP-dependent protease ATPase subunit HslU.